The primary structure comprises 657 residues: Threonine--tRNA ligase (657 aa).

The TGS domain maps to 7–70 (ILAVIALTLP…TADAAIEIIT (64 aa)). A catalytic region spans residues 253–555 (DHRKLGAELE…LIEHTAGNFP (303 aa)). Zn(2+) contacts are provided by cysteine 351, histidine 402, and histidine 532.

It belongs to the class-II aminoacyl-tRNA synthetase family. Homodimer. Zn(2+) is required as a cofactor.

The protein localises to the cytoplasm. The enzyme catalyses tRNA(Thr) + L-threonine + ATP = L-threonyl-tRNA(Thr) + AMP + diphosphate + H(+). Functionally, catalyzes the attachment of threonine to tRNA(Thr) in a two-step reaction: L-threonine is first activated by ATP to form Thr-AMP and then transferred to the acceptor end of tRNA(Thr). Also edits incorrectly charged L-seryl-tRNA(Thr). The protein is Threonine--tRNA ligase of Pelodictyon phaeoclathratiforme (strain DSM 5477 / BU-1).